Reading from the N-terminus, the 750-residue chain is EF-hand domain-containing family member C2 (750 aa).

DM10 domains lie at 75 to 182, 226 to 368, and 430 to 537; these read DKQV…KKIG, DGKV…RTKY, and ISNI…ENNT. Positions 557-592 constitute an EF-hand domain; that stretch reads SKSREITQVFAAADYNHTKVVPYNTFRDILMSITMG.

Microtubule inner protein component of sperm flagellar doublet microtubules.

The protein localises to the cytoplasm. It is found in the cytoskeleton. The protein resides in the cilium axoneme. It localises to the flagellum axoneme. Microtubule inner protein (MIP) part of the dynein-decorated doublet microtubules (DMTs) in cilia axoneme, which is required for motile cilia beating. The sequence is that of EF-hand domain-containing family member C2 (Efhc2) from Mus musculus (Mouse).